Consider the following 371-residue polypeptide: Protein STRICTOSIDINE SYNTHASE-LIKE 7 (371 aa).

The first 25 residues, 1-25 (MPVLFSSRSLILSIIVPLLISIALY), serve as a signal peptide directing secretion. Asparagine 101, asparagine 137, and asparagine 285 each carry an N-linked (GlcNAc...) asparagine glycan. Tyrosine 303 bears the Phosphotyrosine mark.

Belongs to the strictosidine synthase family.

It is found in the vacuole. In Arabidopsis thaliana (Mouse-ear cress), this protein is Protein STRICTOSIDINE SYNTHASE-LIKE 7.